Consider the following 235-residue polypeptide: Exotoxin type C (235 aa).

An N-terminal signal peptide occupies residues 1-27 (MKKINIIKIVFIITVILISTISPIIKS). The Zn(2+) site is built by His194, His228, and Asp230.

Belongs to the staphylococcal/streptococcal toxin family.

Functionally, superantigen that acts as a causative agent of the symptoms associated with scarlet fever. Has been associated with streptococcal toxic shock-like disease and may play a role in the early events of rheumatic fever. Superantigens cross-link major histocompatibility complex (MHC) class II and T-cell receptor (TCR) molecules, resulting in an overstimulation of T-cells associated with a massive release of pyrogenic and inflammatory cytokines. The polypeptide is Exotoxin type C (speC) (Streptococcus pyogenes serotype M1).